Here is a 267-residue protein sequence, read N- to C-terminus: 4-hydroxy-tetrahydrodipicolinate reductase (267 aa).

NAD(+)-binding positions include 8–13 (GAAGRM) and D34. An NADP(+)-binding site is contributed by R35. Residues 98 to 100 (GTT) and 122 to 125 (AANF) contribute to the NAD(+) site. H155 acts as the Proton donor/acceptor in catalysis. H156 contributes to the (S)-2,3,4,5-tetrahydrodipicolinate binding site. K159 (proton donor) is an active-site residue. 165-166 (GT) contacts (S)-2,3,4,5-tetrahydrodipicolinate.

The protein belongs to the DapB family.

Its subcellular location is the cytoplasm. The catalysed reaction is (S)-2,3,4,5-tetrahydrodipicolinate + NAD(+) + H2O = (2S,4S)-4-hydroxy-2,3,4,5-tetrahydrodipicolinate + NADH + H(+). It carries out the reaction (S)-2,3,4,5-tetrahydrodipicolinate + NADP(+) + H2O = (2S,4S)-4-hydroxy-2,3,4,5-tetrahydrodipicolinate + NADPH + H(+). The protein operates within amino-acid biosynthesis; L-lysine biosynthesis via DAP pathway; (S)-tetrahydrodipicolinate from L-aspartate: step 4/4. Its function is as follows. Catalyzes the conversion of 4-hydroxy-tetrahydrodipicolinate (HTPA) to tetrahydrodipicolinate. The polypeptide is 4-hydroxy-tetrahydrodipicolinate reductase (Pseudomonas putida (strain ATCC 47054 / DSM 6125 / CFBP 8728 / NCIMB 11950 / KT2440)).